Consider the following 245-residue polypeptide: TLC domain-containing protein 5 (245 aa).

6 helical membrane passes run 1–21 (MALALCLQVLCSLCGWLSLYI), 38–58 (LVTFTHGVLSIGLSAYIGFID), 75–95 (VHVLCLTLGYFIFDLGWCVYF), 99–119 (GALMLAHHTLSILGIIMALVL), 162–182 (FLFVALFTGVRIGVGACLLFC), and 191–211 (WFVKAGGVAMYAVSWCFMFSI). The TLC domain maps to 29 to 204 (HRSYEWSCRL…AGGVAMYAVS (176 aa)).

It belongs to the TLCD5 family.

The protein localises to the membrane. This chain is TLC domain-containing protein 5, found in Homo sapiens (Human).